Here is an 819-residue protein sequence, read N- to C-terminus: Endonuclease MutS2 (819 aa).

339-346 (GPNTGGKT) serves as a coordination point for ATP. In terms of domain architecture, Smr spans 744–819 (VDVRGLRVDE…GAGVTVAELA (76 aa)).

Belongs to the DNA mismatch repair MutS family. MutS2 subfamily. Homodimer. Binds to stalled ribosomes, contacting rRNA.

Endonuclease that is involved in the suppression of homologous recombination and thus may have a key role in the control of bacterial genetic diversity. Its function is as follows. Acts as a ribosome collision sensor, splitting the ribosome into its 2 subunits. Detects stalled/collided 70S ribosomes which it binds and splits by an ATP-hydrolysis driven conformational change. Acts upstream of the ribosome quality control system (RQC), a ribosome-associated complex that mediates the extraction of incompletely synthesized nascent chains from stalled ribosomes and their subsequent degradation. Probably generates substrates for RQC. In Gemmatimonas aurantiaca (strain DSM 14586 / JCM 11422 / NBRC 100505 / T-27), this protein is Endonuclease MutS2.